Reading from the N-terminus, the 137-residue chain is NADPH-dependent 7-cyano-7-deazaguanine reductase (137 aa).

Cys-51 acts as the Thioimide intermediate in catalysis. The Proton donor role is filled by Asp-58. Substrate contacts are provided by residues Val-73–Leu-75 and His-92–Glu-93.

This sequence belongs to the GTP cyclohydrolase I family. QueF type 1 subfamily.

The protein resides in the cytoplasm. It catalyses the reaction 7-aminomethyl-7-carbaguanine + 2 NADP(+) = 7-cyano-7-deazaguanine + 2 NADPH + 3 H(+). It functions in the pathway tRNA modification; tRNA-queuosine biosynthesis. Its function is as follows. Catalyzes the NADPH-dependent reduction of 7-cyano-7-deazaguanine (preQ0) to 7-aminomethyl-7-deazaguanine (preQ1). The polypeptide is NADPH-dependent 7-cyano-7-deazaguanine reductase (Gloeobacter violaceus (strain ATCC 29082 / PCC 7421)).